The chain runs to 253 residues: Major prion protein (253 aa).

An N-terminal signal peptide occupies residues methionine 1 to cysteine 22. The segment at lysine 23–tyrosine 38 is interaction with ADGRG6. Residues lysine 23 to serine 230 form an interaction with GRB2, ERI3 and SYN1 region. The tract at residues proline 26 to serine 108 is disordered. 5 repeat units span residues proline 51–glutamine 59, proline 60–glutamine 67, proline 68–glutamine 75, proline 76–glutamine 83, and proline 84–glutamine 91. The 5 X 8 AA tandem repeats of P-H-G-G-G-W-G-Q stretch occupies residues proline 51–glutamine 91. Positions glutamine 52 to threonine 95 are enriched in gly residues. Cu(2+) is bound by residues histidine 61, glycine 62, glycine 63, histidine 69, glycine 70, glycine 71, histidine 77, glycine 78, glycine 79, histidine 85, glycine 86, and glycine 87. Cysteine 179 and cysteine 214 are disulfide-bonded. Asparagine 181 and asparagine 197 each carry an N-linked (GlcNAc...) asparagine glycan. A lipid anchor (GPI-anchor amidated serine) is attached at serine 230. Positions serine 231–glycine 253 are cleaved as a propeptide — removed in mature form.

It belongs to the prion family. As to quaternary structure, monomer and homodimer. Has a tendency to aggregate into amyloid fibrils containing a cross-beta spine, formed by a steric zipper of superposed beta-strands. Soluble oligomers may represent an intermediate stage on the path to fibril formation. Copper binding may promote oligomerization. Interacts with GRB2, APP, ERI3/PRNPIP and SYN1. Mislocalized cytosolically exposed PrP interacts with MGRN1; this interaction alters MGRN1 subcellular location and causes lysosomal enlargement. Interacts with APP. Interacts with KIAA1191. Interacts with ADGRG6.

It is found in the cell membrane. Its subcellular location is the golgi apparatus. Its function is as follows. Its primary physiological function is unclear. May play a role in neuronal development and synaptic plasticity. May be required for neuronal myelin sheath maintenance. May promote myelin homeostasis through acting as an agonist for ADGRG6 receptor. May play a role in iron uptake and iron homeostasis. Soluble oligomers are toxic to cultured neuroblastoma cells and induce apoptosis (in vitro). Association with GPC1 (via its heparan sulfate chains) targets PRNP to lipid rafts. Also provides Cu(2+) or Zn(2+) for the ascorbate-mediated GPC1 deaminase degradation of its heparan sulfate side chains. This is Major prion protein (PRNP) from Colobus guereza (Mantled guereza).